Consider the following 625-residue polypeptide: Cytochrome c oxidase subunit 1 (625 aa).

The chain crosses the membrane as a helical span at residues 23–43 (IAIMYLIAGTLFFVKAGVMAL). His69 contacts Fe(II)-heme a. The next 6 helical transmembrane spans lie at 72-92 (IMLF…VIPL), 99-119 (VAFP…GLLL), 151-171 (FYVL…INFL), 195-215 (FISS…LALL), 240-260 (IFWI…FGII), and 272-292 (LFGY…GFMV). Cu cation contacts are provided by His246 and Tyr250. The 1'-histidyl-3'-tyrosine (His-Tyr) cross-link spans 246–250 (HPEVY). Positions 295 and 296 each coordinate Cu cation. A run of 2 helical transmembrane segments spans residues 309–329 (IFAV…FNWL) and 343–363 (MLFA…GVML). Residue His381 coordinates heme a3. The next 5 membrane-spanning stretches (helical) occupy residues 382-402 (FHYI…FYWY), 417-437 (LFFW…HLLG), 460-480 (ISTI…INVI), 551-571 (SILP…LIML), and 577-597 (IINP…CMFV). A Fe(II)-heme a-binding site is contributed by His383.

The protein belongs to the heme-copper respiratory oxidase family.

Its subcellular location is the cell membrane. The enzyme catalyses 4 Fe(II)-[cytochrome c] + O2 + 8 H(+)(in) = 4 Fe(III)-[cytochrome c] + 2 H2O + 4 H(+)(out). It functions in the pathway energy metabolism; oxidative phosphorylation. In terms of biological role, cytochrome c oxidase is the component of the respiratory chain that catalyzes the reduction of oxygen to water. Subunits 1-3 form the functional core of the enzyme complex. CO I is the catalytic subunit of the enzyme. Electrons originating in cytochrome c are transferred via the copper A center of subunit 2 and heme A of subunit 1 to the bimetallic center formed by heme A3 and copper B. This is Cytochrome c oxidase subunit 1 (ctaD) from Alkalihalophilus pseudofirmus (strain ATCC BAA-2126 / JCM 17055 / OF4) (Bacillus pseudofirmus).